The chain runs to 87 residues: Small ribosomal subunit protein bS20 (87 aa).

The segment at 1 to 22 (MANSAGSKKRARQAVKSRAHNG) is disordered. Over residues 7-19 (SKKRARQAVKSRA) the composition is skewed to basic residues.

This sequence belongs to the bacterial ribosomal protein bS20 family.

Binds directly to 16S ribosomal RNA. The chain is Small ribosomal subunit protein bS20 from Marinomonas sp. (strain MWYL1).